A 396-amino-acid polypeptide reads, in one-letter code: Ornithine aminotransferase 2 (396 aa).

Lysine 255 is modified (N6-(pyridoxal phosphate)lysine).

The protein belongs to the class-III pyridoxal-phosphate-dependent aminotransferase family. OAT subfamily. It depends on pyridoxal 5'-phosphate as a cofactor.

The protein resides in the cytoplasm. It catalyses the reaction a 2-oxocarboxylate + L-ornithine = L-glutamate 5-semialdehyde + an L-alpha-amino acid. It functions in the pathway amino-acid biosynthesis; L-proline biosynthesis; L-glutamate 5-semialdehyde from L-ornithine: step 1/1. In terms of biological role, catalyzes the interconversion of ornithine to glutamate semialdehyde. This Staphylococcus aureus (strain COL) protein is Ornithine aminotransferase 2.